A 25-amino-acid chain; its full sequence is Pregnancy-associated glycoprotein 74 (25 aa).

N-linked (GlcNAc...) asparagine glycosylation is found at N4 and N21.

Belongs to the peptidase A1 family. In terms of processing, N-glycosylated. In terms of tissue distribution, placental cotyledons.

Its subcellular location is the secreted. It is found in the extracellular space. The polypeptide is Pregnancy-associated glycoprotein 74 (Bison bison (American bison)).